The sequence spans 2793 residues: Iterative polyketide synthase afoE (2793 aa).

The segment at Met-1–Pro-401 is N-terminal acylcarrier protein transacylase domain (SAT). Cys-157 (nucleophile; for transacylase activity) is an active-site residue. His-279 acts as the Proton donor/acceptor; for transacylase activity in catalysis. Positions Ser-435–Gln-862 constitute a Ketosynthase family 3 (KS3) domain. Residues Cys-611, His-746, and His-785 each act as for beta-ketoacyl synthase activity in the active site. The interval Phe-977 to Arg-1265 is malonyl-CoA:ACP transacylase (MAT). An N-terminal hotdog fold region spans residues Trp-1384–Asp-1515. Positions Trp-1384 to Ser-1698 constitute a PKS/mFAS DH domain. The interval Tyr-1411–Ser-1696 is product template (PT) domain. Residue His-1415 is the Proton acceptor; for dehydratase activity of the active site. The tract at residues Val-1550–Ser-1698 is C-terminal hotdog fold. The Proton donor; for dehydratase activity role is filled by Asp-1607. The segment at Pro-1734–Arg-1776 is disordered. A compositionally biased stretch (basic residues) spans Lys-1747–Ser-1769. A Carrier domain is found at Arg-1776–Leu-1850. O-(pantetheine 4'-phosphoryl)serine is present on Ser-1810. The interval Pro-1853–Leu-1903 is disordered. Positions Glu-1859–Lys-1868 are enriched in acidic residues. The segment at Asn-2115–Pro-2294 is methyltransferase domain. Residues Ser-2360 to Arg-2379 are disordered. The segment at Val-2387–Ala-2630 is NADPH-binding domain.

It depends on pantetheine 4'-phosphate as a cofactor.

The catalysed reaction is (3E,5E,7S)-5,7-dimethyl-2-oxonona-3,5-dienyl-[ACP] + 4 malonyl-CoA + AH2 + S-adenosyl-L-methionine + 3 H(+) = 6-[(3E,5E,7S)-5,7-dimethyl-2-oxonona-3,5-dienyl]-2,4-dihydroxy-3-methylbenzaldehyde + holo-[ACP] + A + S-adenosyl-L-homocysteine + 4 CO2 + 4 CoA + H2O. It participates in secondary metabolite biosynthesis. Functionally, iterative polyketide synthase; part of the gene cluster that mediates the biosynthesis of asperfuranone, a probable antitumor agent. The polyketide synthase afoG is responsible for producing the 3,5-dimethyloctadienone moiety from acetyl-CoA, three malonyl-CoA, and two S-adenosyl methionines (SAM). The 3,5-dimethyloctadienone moiety is then loaded onto the SAT domain of afoE and extended with four malonyl-CoA and one SAM, which leads to the formation of 2,4-dihydroxy-6-(5,7-dimethyl-2-oxo-trans-3-trans-5-nonadienyl)-3-methylbenzaldehyde (compound 2) after reductive release and aldol condensation. AfoD is the next enzyme in the biosynthesis sequence and hydroxylates the side chain at the benzylic position of compound 2. After benzylic hydroxylation, a furan ring is formed after five-member ring hemiacetal formation and water elimination. AfoF and afoC are proposed to oxidize the R-diketone proton and to reduce the unconjugated carbonyl group, respectively, to generate asperfuranone. Since no intermediates could be isolated from afoF and afoC deletants, the sequence of these two enzymes is not fully understood. Moreover, since afoC deletant still produces a small amount of asperfuranone, other endogenous oxidoreductases might catalyze the same reaction with much less efficiency. The polypeptide is Iterative polyketide synthase afoE (Emericella nidulans (strain FGSC A4 / ATCC 38163 / CBS 112.46 / NRRL 194 / M139) (Aspergillus nidulans)).